The following is a 319-amino-acid chain: Methionyl-tRNA formyltransferase (319 aa).

114-117 (SLLP) is a (6S)-5,6,7,8-tetrahydrofolate binding site.

It belongs to the Fmt family.

The catalysed reaction is L-methionyl-tRNA(fMet) + (6R)-10-formyltetrahydrofolate = N-formyl-L-methionyl-tRNA(fMet) + (6S)-5,6,7,8-tetrahydrofolate + H(+). Attaches a formyl group to the free amino group of methionyl-tRNA(fMet). The formyl group appears to play a dual role in the initiator identity of N-formylmethionyl-tRNA by promoting its recognition by IF2 and preventing the misappropriation of this tRNA by the elongation apparatus. The protein is Methionyl-tRNA formyltransferase of Acinetobacter baylyi (strain ATCC 33305 / BD413 / ADP1).